Reading from the N-terminus, the 150-residue chain is Ribosomal RNA large subunit methyltransferase H (150 aa).

S-adenosyl-L-methionine contacts are provided by residues Ala-100 and 118–123 (LSEMTF).

Belongs to the RNA methyltransferase RlmH family. As to quaternary structure, homodimer.

It localises to the cytoplasm. The enzyme catalyses pseudouridine(1915) in 23S rRNA + S-adenosyl-L-methionine = N(3)-methylpseudouridine(1915) in 23S rRNA + S-adenosyl-L-homocysteine + H(+). Functionally, specifically methylates the pseudouridine at position 1915 (m3Psi1915) in 23S rRNA. This Helicobacter pylori (strain Shi470) protein is Ribosomal RNA large subunit methyltransferase H.